We begin with the raw amino-acid sequence, 413 residues long: BEN domain-containing protein 7 (413 aa).

Glycyl lysine isopeptide (Lys-Gly) (interchain with G-Cter in SUMO2) cross-links involve residues Lys-16, Lys-56, and Lys-85. Residues 78-88 (GKEGEKLKEEP) show a composition bias toward basic and acidic residues. Disordered regions lie at residues 78–153 (GKEG…GELP) and 208–243 (RTAVSRKRNKKKKVPPKTVEPLTVKQKPSGSEMEKK). Polar residues-rich tracts occupy residues 99-111 (LNSSAEAPQSLHP) and 121-153 (PPQSGQFSGQYGTRSRTFQSQPHPTTSSNGELP). Residues 211–222 (VSRKRNKKKKVP) show a composition bias toward basic residues. Residues 223 to 232 (PKTVEPLTVK) show a composition bias toward low complexity. Lys-243 participates in a covalent cross-link: Glycyl lysine isopeptide (Lys-Gly) (interchain with G-Cter in SUMO2). The BEN domain maps to 287 to 392 (GFDVFMPKSQ…IKLARRRLKR (106 aa)). Thr-324 is subject to Phosphothreonine. Residue Ser-328 is modified to Phosphoserine.

The sequence is that of BEN domain-containing protein 7 (BEND7) from Homo sapiens (Human).